Consider the following 94-residue polypeptide: Small ubiquitin-related modifier 3 (94 aa).

Lys-11 participates in a covalent cross-link: Glycyl lysine isopeptide (Lys-Gly) (interchain with G-Cter in SUMO). Positions 15-92 (DHINLKVAGQ…IDVFQQQTGG (78 aa)) constitute a Ubiquitin-like domain. Gly-92 participates in a covalent cross-link: Glycyl lysine isopeptide (Gly-Lys) (interchain with K-? in acceptor proteins). The propeptide occupies 93–94 (SC).

It belongs to the ubiquitin family. SUMO subfamily. As to quaternary structure, interacts with sae2 and ube2i. Covalently attached to a number of proteins. Polymeric chains can be formed through Lys-11 cross-linking. In terms of processing, cleavage of precursor form by a sentrin-specific protease is necessary for function.

It localises to the cytoplasm. It is found in the nucleus. The protein resides in the PML body. Its function is as follows. Ubiquitin-like protein which can be covalently attached to target lysines either as a monomer or as a lysine-linked polymer. Does not seem to be involved in protein degradation and may function as an antagonist of ubiquitin in the degradation process. Plays a role in a number of cellular processes such as nuclear transport, DNA replication and repair, mitosis and signal transduction. Covalent attachment to its substrates requires prior activation by the E1 complex sae1-sae2 and linkage to the E2 enzyme ube2i. This Danio rerio (Zebrafish) protein is Small ubiquitin-related modifier 3 (sumo3).